The following is a 142-amino-acid chain: Malate dehydrogenase, mitochondrial (142 aa).

NAD(+) contacts are provided by residues 1-6 (ASGGIG) and Asp26. Residues Arg73 and Arg79 each coordinate substrate. Residues Asn86 and 109–111 (ITN) contribute to the NAD(+) site. Position 111 (Asn111) interacts with substrate.

The protein belongs to the LDH/MDH superfamily. MDH type 1 family. Homodimer.

The protein resides in the mitochondrion matrix. It carries out the reaction (S)-malate + NAD(+) = oxaloacetate + NADH + H(+). The chain is Malate dehydrogenase, mitochondrial from Schistosoma mansoni (Blood fluke).